The primary structure comprises 109 residues: Phosphoribosyl-ATP pyrophosphatase (109 aa).

The protein belongs to the PRA-PH family.

The protein resides in the cytoplasm. It catalyses the reaction 1-(5-phospho-beta-D-ribosyl)-ATP + H2O = 1-(5-phospho-beta-D-ribosyl)-5'-AMP + diphosphate + H(+). The protein operates within amino-acid biosynthesis; L-histidine biosynthesis; L-histidine from 5-phospho-alpha-D-ribose 1-diphosphate: step 2/9. The protein is Phosphoribosyl-ATP pyrophosphatase of Parvibaculum lavamentivorans (strain DS-1 / DSM 13023 / NCIMB 13966).